The primary structure comprises 645 residues: uncharacterized protein (645 aa).

This sequence belongs to the mycobacterial PPE family.

This is an uncharacterized protein from Mycobacterium tuberculosis (strain CDC 1551 / Oshkosh).